A 215-amino-acid chain; its full sequence is Protein C' (215 aa).

Disordered stretches follow at residues 12-34 (MPSF…SRSR) and 51-71 (SEGT…QALP). The interval 15 to 22 (FLKKILKL) is involved in self-degradation and in host STAT1 degradation. Residues 51-65 (SEGTEAGSTTPSTLP) show a composition bias toward polar residues.

This sequence belongs to the respirovirus protein C family. In terms of assembly, the different isoforms interact (via C-terminus) with unphosphorylated and phosphorylated human STAT1 (via N-terminus), favoring the formation of parallel STAT1 homodimers. The different isoforms do not interact with host STAT2. C protein interacts with L protein; this interaction has an inhibitory effect on viral transcription and replication. Post-translationally, Y1 and Y2 proteins are produced not only by alternative initiation, but also by proteolytic cleavage of C'. Only alternative initiation is detected in vitro, whereas in vivo cleavage seems to be predominant.

Its subcellular location is the host cytoplasm. In terms of biological role, the different products prevent the establishment of cellular antiviral state by blocking the interferon-alpha/beta (IFN-alpha/beta) and IFN-gamma signaling pathways. They inhibit IFN-alpha/beta induced tyrosine phosphorylation of STAT1 and STAT2. Blocking the IFN-alpha/beta pathway requires binding to STAT1 in the cytoplasm. They inhibit IFN-gamma induced serine phosphorylation of STAT1. Block the IFN-gamma pathway by binding to and stabilizing the parallel form of the STAT1 dimer, further inducing high-molecular-weight complex formation and inhibition of transcription by IFN-gamma. May also have a role in preventing the cell to enter apoptosis. Modulate regulation of viral transcription and replication. Overexpression inhibits the viral RNA polymerase. The absence of all C', C, Y1 and Y2 proteins leads to viral delayed growth. Plays an important role in virion particles release. Modulates virion shape. The chain is Protein C' (P/V/C) from Sendai virus (strain Harris) (SeV).